The chain runs to 150 residues: Large ribosomal subunit protein bL9 (150 aa).

Belongs to the bacterial ribosomal protein bL9 family.

Functionally, binds to the 23S rRNA. The protein is Large ribosomal subunit protein bL9 of Janthinobacterium sp. (strain Marseille) (Minibacterium massiliensis).